Consider the following 754-residue polypeptide: Disintegrin and metalloproteinase domain-containing protein 7 (754 aa).

The first 18 residues, 1–18 (MLPGCIFLMILLIPQVKE), serve as a signal peptide directing secretion. Residues 19 to 176 (KFILGVEGQQ…NYSCTELNFT (158 aa)) constitute a propeptide that is removed on maturation. The Extracellular portion of the chain corresponds to 19-668 (KFILGVEGQQ…ACEETLHVTN (650 aa)). 4 N-linked (GlcNAc...) asparagine glycosylation sites follow: Asn84, Asn167, Asn174, and Asn184. A Peptidase M12B domain is found at 199–394 (KYVELFIVAD…YKPTCMLNIP (196 aa)). Intrachain disulfides connect Cys310/Cys389, Cys350/Cys373, Cys352/Cys357, and Cys460/Cys480. The 87-residue stretch at 402–488 (FQFCGNKKLD…ACPKDQFRVN (87 aa)) folds into the Disintegrin domain. Residues Asn584 and Asn668 are each glycosylated (N-linked (GlcNAc...) asparagine). A helical transmembrane segment spans residues 669 to 689 (ITILVVVLVLVIVGIGVLILL). The Cytoplasmic segment spans residues 690–754 (VRYRKCIKLK…GIADPNQSAK (65 aa)).

In terms of assembly, interacts with ITM2B in sperm; the interaction increases following capacitation. Interacts with HSPA5 and CANX.

It is found in the membrane. In terms of biological role, required for normal male fertility via maintenance of epithelial cell morphology in the caput epididymis and subsequently correct epididymis lumen structure required for sperm development. Plays a role in sperm motility, flagella morphology and tyrosine phosphorylation during sperm capacitance. Plays a role in normal expression levels of HSPA5, ITM2B and ADAM2 in sperm both prior to and post-capacitation. This is a non catalytic metalloprotease-like protein. This Homo sapiens (Human) protein is Disintegrin and metalloproteinase domain-containing protein 7.